The following is a 360-amino-acid chain: Holliday junction branch migration complex subunit RuvB (360 aa).

Positions 1 to 46 (MAIKRSGNSDRPAKNPSSTPGTNAPTLLSPTPTHQEKETSEEKIRP) are disordered. Residues 13–205 (AKNPSSTPGT…FGLIQRLRFY (193 aa)) form a large ATPase domain (RuvB-L) region. A compositionally biased stretch (polar residues) spans 15-33 (NPSSTPGTNAPTLLSPTPT). The segment covering 34 to 46 (HQEKETSEEKIRP) has biased composition (basic and acidic residues). Residues I44, R45, G86, K89, T90, T91, 152 to 154 (EDY), R195, Y205, and R242 contribute to the ATP site. Mg(2+) is bound at residue T90. Residues 206 to 276 (EVDELTLIVL…LASEALDIYQ (71 aa)) form a small ATPAse domain (RuvB-S) region. The head domain (RuvB-H) stretch occupies residues 279-360 (KQGLDWIDRL…LTSEEQLSIF (82 aa)). Positions 334 and 339 each coordinate DNA.

The protein belongs to the RuvB family. Homohexamer. Forms an RuvA(8)-RuvB(12)-Holliday junction (HJ) complex. HJ DNA is sandwiched between 2 RuvA tetramers; dsDNA enters through RuvA and exits via RuvB. An RuvB hexamer assembles on each DNA strand where it exits the tetramer. Each RuvB hexamer is contacted by two RuvA subunits (via domain III) on 2 adjacent RuvB subunits; this complex drives branch migration. In the full resolvosome a probable DNA-RuvA(4)-RuvB(12)-RuvC(2) complex forms which resolves the HJ.

The protein localises to the cytoplasm. It carries out the reaction ATP + H2O = ADP + phosphate + H(+). Its function is as follows. The RuvA-RuvB-RuvC complex processes Holliday junction (HJ) DNA during genetic recombination and DNA repair, while the RuvA-RuvB complex plays an important role in the rescue of blocked DNA replication forks via replication fork reversal (RFR). RuvA specifically binds to HJ cruciform DNA, conferring on it an open structure. The RuvB hexamer acts as an ATP-dependent pump, pulling dsDNA into and through the RuvAB complex. RuvB forms 2 homohexamers on either side of HJ DNA bound by 1 or 2 RuvA tetramers; 4 subunits per hexamer contact DNA at a time. Coordinated motions by a converter formed by DNA-disengaged RuvB subunits stimulates ATP hydrolysis and nucleotide exchange. Immobilization of the converter enables RuvB to convert the ATP-contained energy into a lever motion, pulling 2 nucleotides of DNA out of the RuvA tetramer per ATP hydrolyzed, thus driving DNA branch migration. The RuvB motors rotate together with the DNA substrate, which together with the progressing nucleotide cycle form the mechanistic basis for DNA recombination by continuous HJ branch migration. Branch migration allows RuvC to scan DNA until it finds its consensus sequence, where it cleaves and resolves cruciform DNA. This Rippkaea orientalis (strain PCC 8801 / RF-1) (Cyanothece sp. (strain PCC 8801)) protein is Holliday junction branch migration complex subunit RuvB.